The chain runs to 441 residues: Zinc finger and BTB domain-containing protein 8A (441 aa).

Residues 24–92 enclose the BTB domain; that stretch reads CDCSILVEGK…VYSGKLSLTG (69 aa). 2 stretches are compositionally biased toward polar residues: residues 143-170 and 178-196; these read NGVERSSFYSGGWQEGSSSPRSHLSPEQ and KSWNKYNYHPASQKNTQQP. The tract at residues 143-251 is disordered; sequence NGVERSSFYS…QSEEQAQIDA (109 aa). Residues Ser161 and Ser167 each carry the phosphoserine modification. Glycyl lysine isopeptide (Lys-Gly) (interchain with G-Cter in SUMO2) cross-links involve residues Lys178, Lys182, Lys191, and Lys199. Over residues 198–208 the composition is skewed to basic and acidic residues; sequence AKHEPRKESIK. Residues 234–243 are compositionally biased toward low complexity; sequence SDSSSHVSQS. C2H2-type zinc fingers lie at residues 282–304 and 310–333; these read FKCPYCTHVVKRKADLKRHLRCH and YPCQACGKRFSRLDHLSSHFRTIH. Lys437 participates in a covalent cross-link: Glycyl lysine isopeptide (Lys-Gly) (interchain with G-Cter in SUMO2).

The protein localises to the nucleus. Its function is as follows. May be involved in transcriptional regulation. The protein is Zinc finger and BTB domain-containing protein 8A (ZBTB8A) of Homo sapiens (Human).